The primary structure comprises 219 residues: MGMSSLKLLKYVLFFFNFLFWVCGCCILGFGIHLLVQNTYGILFRNLPFLTLGNVLVIVGSIIMVVAFLGCMGSIKENKCLLMSFFVLLLLILLAEVTLAILLFVYEKKINTLVAEGLNDSIQHYHSDNSTRMAWDFIQSQLQCCGVNGSSDWISGPPSSCPSGADVQGCYKKGQAWFHSNFLYIGIVTICVCVIQVLGMSFALTLNCQIDKTSQALGL.

The Cytoplasmic segment spans residues 2–11 (GMSSLKLLKY). Residues 12-32 (VLFFFNFLFWVCGCCILGFGI) form a helical membrane-spanning segment. The Extracellular portion of the chain corresponds to 33–54 (HLLVQNTYGILFRNLPFLTLGN). The chain crosses the membrane as a helical span at residues 55-69 (VLVIVGSIIMVVAFL). The Cytoplasmic portion of the chain corresponds to 70–80 (GCMGSIKENKC). A helical membrane pass occupies residues 81-106 (LLMSFFVLLLLILLAEVTLAILLFVY). Residues 107 to 181 (EKKINTLVAE…KKGQAWFHSN (75 aa)) are Extracellular-facing. N-linked (GlcNAc...) asparagine glycosylation is found at Asn119, Asn129, and Asn148. The helical transmembrane segment at 182–206 (FLYIGIVTICVCVIQVLGMSFALTL) threads the bilayer. Residues 207–219 (NCQIDKTSQALGL) lie on the Cytoplasmic side of the membrane.

Belongs to the tetraspanin (TM4SF) family. Interacts with SCIMP. Interacts with CD45/PTPRC. Interacts with IL7R. Interacts with RBL2 and PPP2CA. As to expression, spleen and thymus, B-cells, monocytes, macrophages, neutrophils, single (CD4 or CD8) positive thymocytes, peripheral T-cells.

It is found in the cell membrane. The protein resides in the cell junction. The protein localises to the membrane. Functionally, required for efficient formation of myofibers in regenerating muscle at the level of cell fusion. May be involved in growth regulation in hematopoietic cells. The protein is Leukocyte surface antigen CD53 (Cd53) of Rattus norvegicus (Rat).